A 487-amino-acid chain; its full sequence is Zinc finger and BTB domain-containing protein 32 (487 aa).

Residues 29–87 (CDTLITVGSQEFPAHSLVLAGVSQQLGRRGQWALGEGISPSTFAQLLNFVYGESVELQP) form the BTB domain. Over residues 112–166 (ARGDRAKKPDPGLKKHQEEPEKPSRNPERELGDPGEKQKPEQVSRTGGREQEMLH) the composition is skewed to basic and acidic residues. Disordered stretches follow at residues 112–244 (ARGD…TSVT) and 308–371 (QNQL…ARSR). Positions 308–320 (QNQLASSSPTPGS) are enriched in polar residues. Over residues 357–369 (PPRPHPPPAPPAR) the composition is skewed to pro residues. 3 C2H2-type zinc fingers span residues 373 to 395 (YACS…YRVH), 401 to 423 (FSCS…LRTH), and 428 to 450 (YRCS…MRGH). The disordered stretch occupies residues 468-487 (SSSRPSRPSTSPCCPSSSTT).

This sequence belongs to the krueppel C2H2-type zinc-finger protein family. In terms of assembly, homodimer (via PTB domain). Interacts with the N-terminal of FANCC. Interacts with ZBTB16. Interacts with GATA3. Predominantly expressed in testis. Some isoforms are ubiquitously expressed.

Its subcellular location is the nucleus. DNA-binding protein that binds to the to a 5'-TGTACAGTGT-3' core sequence. May function as a transcriptional transactivator and transcriptional repressor. Probably exerts its repressor effect by preventing GATA3 from binding to DNA. May play a role in regulating the differentiation and activation of helper T-cells. The chain is Zinc finger and BTB domain-containing protein 32 (ZBTB32) from Homo sapiens (Human).